Consider the following 67-residue polypeptide: Large ribosomal subunit protein bL35 (67 aa).

A compositionally biased stretch (basic residues) spans 1–16; sequence MPKMKTKSSAKKRFRV. The interval 1 to 24 is disordered; sequence MPKMKTKSSAKKRFRVRPGGTVKR.

The protein belongs to the bacterial ribosomal protein bL35 family.

The sequence is that of Large ribosomal subunit protein bL35 from Paracidovorax citrulli (strain AAC00-1) (Acidovorax citrulli).